The sequence spans 334 residues: Heat-inducible transcription repressor HrcA (334 aa).

It belongs to the HrcA family.

Its function is as follows. Negative regulator of class I heat shock genes (grpE-dnaK-dnaJ and groELS operons). Prevents heat-shock induction of these operons. In Paracidovorax citrulli (strain AAC00-1) (Acidovorax citrulli), this protein is Heat-inducible transcription repressor HrcA.